Here is a 470-residue protein sequence, read N- to C-terminus: Putative multidrug resistance protein MdtD (470 aa).

At 1-11 (MTELPDNTRWQ) the chain is on the periplasmic side. Residues 12-32 (LWIVALGFFMQSLDTTIVNTA) traverse the membrane as a helical segment. The Cytoplasmic segment spans residues 33–48 (LPSMAKSLGESPLHMH). The helical transmembrane segment at 49 to 69 (MVVVSYVLTVAVMLPASGWLA) threads the bilayer. At 70–76 (DKIGVRN) the chain is on the periplasmic side. A helical transmembrane segment spans residues 77 to 97 (IFFAAIVLFTLGSLFCALSGT). The Cytoplasmic segment spans residues 98 to 101 (LNQL). A helical transmembrane segment spans residues 102–124 (VLARVLQGVGGAMMVPVGRLTVM). The Periplasmic segment spans residues 125-137 (KIVPRAQYMAAMT). A helical transmembrane segment spans residues 138–158 (FVTLPGQIGPLLGPALGGVLV). Over 159-164 (EYASWH) the chain is Cytoplasmic. Residues 165 to 185 (WIFLINIPVGIVGAMATFMLM) form a helical membrane-spanning segment. Residues 186–196 (PNYTIETRRFD) are Periplasmic-facing. Residues 197–217 (LPGFLLLAIGMAVLTLALDGS) traverse the membrane as a helical segment. Topologically, residues 218–221 (KSMG) are cytoplasmic. The helical transmembrane segment at 222-242 (ISPWTLAGLAAGGAAAILLYL) threads the bilayer. Residues 243–262 (LHAKKNSGALFSLRLFCTPT) lie on the Periplasmic side of the membrane. A helical membrane pass occupies residues 263 to 283 (FSLGLLGSFAGRIGSGMLPFM). Topologically, residues 284–285 (TP) are cytoplasmic. Residues 286–306 (VFLQIGLGFSPFHAGLMMIPM) traverse the membrane as a helical segment. The Periplasmic portion of the chain corresponds to 307–341 (VLGSMGMKRIVVQIVNRFGYRRVLVATTLGLALVS). A helical transmembrane segment spans residues 342–362 (LLFMSVALLGWYYLLPLVLLL). At 363-395 (QGMVNSARFSSMNTLTLKDLPDTLASSGNSLLS) the chain is on the cytoplasmic side. A helical transmembrane segment spans residues 396 to 416 (MIMQLSMSIGVTIAGMLLGMF). Over 417 to 430 (GQQHIGIDSSATHH) the chain is Periplasmic. The chain crosses the membrane as a helical span at residues 431 to 451 (VFMYTWLCMAVIIALPAIIFA). At 452 to 470 (RVPNDTQQNMVISRRKRSL) the chain is on the cytoplasmic side.

The protein belongs to the major facilitator superfamily. TCR/Tet family.

The protein localises to the cell inner membrane. The chain is Putative multidrug resistance protein MdtD from Salmonella paratyphi B (strain ATCC BAA-1250 / SPB7).